The chain runs to 380 residues: Anhydro-N-acetylmuramic acid kinase (380 aa).

9 to 16 is a binding site for ATP; sequence GTSADGVD.

The protein belongs to the anhydro-N-acetylmuramic acid kinase family.

It catalyses the reaction 1,6-anhydro-N-acetyl-beta-muramate + ATP + H2O = N-acetyl-D-muramate 6-phosphate + ADP + H(+). Its pathway is amino-sugar metabolism; 1,6-anhydro-N-acetylmuramate degradation. It functions in the pathway cell wall biogenesis; peptidoglycan recycling. In terms of biological role, catalyzes the specific phosphorylation of 1,6-anhydro-N-acetylmuramic acid (anhMurNAc) with the simultaneous cleavage of the 1,6-anhydro ring, generating MurNAc-6-P. Is required for the utilization of anhMurNAc either imported from the medium or derived from its own cell wall murein, and thus plays a role in cell wall recycling. The protein is Anhydro-N-acetylmuramic acid kinase of Synechococcus sp. (strain CC9902).